The following is a 162-amino-acid chain: NADH-quinone oxidoreductase subunit I (162 aa).

4Fe-4S ferredoxin-type domains lie at 53–83 (LRRY…IESE) and 93–122 (TRYD…ETRV). Residues C63, C66, C69, C73, C102, C105, C108, and C112 each coordinate [4Fe-4S] cluster.

It belongs to the complex I 23 kDa subunit family. As to quaternary structure, NDH-1 is composed of 14 different subunits. Subunits NuoA, H, J, K, L, M, N constitute the membrane sector of the complex. It depends on [4Fe-4S] cluster as a cofactor.

The protein localises to the cell inner membrane. It carries out the reaction a quinone + NADH + 5 H(+)(in) = a quinol + NAD(+) + 4 H(+)(out). In terms of biological role, NDH-1 shuttles electrons from NADH, via FMN and iron-sulfur (Fe-S) centers, to quinones in the respiratory chain. The immediate electron acceptor for the enzyme in this species is believed to be ubiquinone. Couples the redox reaction to proton translocation (for every two electrons transferred, four hydrogen ions are translocated across the cytoplasmic membrane), and thus conserves the redox energy in a proton gradient. This chain is NADH-quinone oxidoreductase subunit I, found in Nitrosomonas europaea (strain ATCC 19718 / CIP 103999 / KCTC 2705 / NBRC 14298).